The following is a 302-amino-acid chain: Bifunctional protein FolD (302 aa).

NADP(+)-binding positions include 165–167 (GRS), Ser190, and Ile231.

Belongs to the tetrahydrofolate dehydrogenase/cyclohydrolase family. Homodimer.

It catalyses the reaction (6R)-5,10-methylene-5,6,7,8-tetrahydrofolate + NADP(+) = (6R)-5,10-methenyltetrahydrofolate + NADPH. It carries out the reaction (6R)-5,10-methenyltetrahydrofolate + H2O = (6R)-10-formyltetrahydrofolate + H(+). The protein operates within one-carbon metabolism; tetrahydrofolate interconversion. In terms of biological role, catalyzes the oxidation of 5,10-methylenetetrahydrofolate to 5,10-methenyltetrahydrofolate and then the hydrolysis of 5,10-methenyltetrahydrofolate to 10-formyltetrahydrofolate. This Prochlorococcus marinus (strain SARG / CCMP1375 / SS120) protein is Bifunctional protein FolD.